The sequence spans 67 residues: DNA-directed RNA polymerase subunit omega (67 aa).

It belongs to the RNA polymerase subunit omega family. The RNAP catalytic core consists of 2 alpha, 1 beta, 1 beta' and 1 omega subunit. When a sigma factor is associated with the core the holoenzyme is formed, which can initiate transcription.

It carries out the reaction RNA(n) + a ribonucleoside 5'-triphosphate = RNA(n+1) + diphosphate. Promotes RNA polymerase assembly. Latches the N- and C-terminal regions of the beta' subunit thereby facilitating its interaction with the beta and alpha subunits. This chain is DNA-directed RNA polymerase subunit omega, found in Burkholderia pseudomallei (strain 1106a).